The sequence spans 249 residues: Zinc finger protein mnm-2 (249 aa).

A disordered region spans residues 20–65; it reads PKEELETEEEDEEEDEEEELSSSEVTSENDMETESASSSASSVGQP. A compositionally biased stretch (acidic residues) spans 24–52; the sequence is LETEEEDEEEDEEEELSSSEVTSENDMET. 3 consecutive C2H2-type zinc fingers follow at residues 168-190, 196-218, and 224-246; these read YRCD…KRIH, FKCE…RLTH, and YVCG…MRTH.

In terms of tissue distribution, in larva and adult, expressed in the M3 pharyngeal motor neurons, extrapharyngeal neurons in the head, the PQR tail neurons, rectal cells, vulva cells, the spermetheca-uterine valve, body wall muscle cells and neurons of the ventral nerve cord. In the embryo, expressed in pharyngeal cells, extrapharyngeal head neurons and within the tail. Expressed in body wall muscle cells during late embryonic stages. Expressed in the mother cells of the M2 and M3 pharyngeal motor neurons precursor cells at the embryonic bean stage and subsequently in the M2 and M3 cells as they are born. Expression is sustained only in the two M3 cells up to at least the 5-day-old adult. In contrast, expression gradually declines in the M2 cells beginning from the time of their birth, and is completely undetectable by the time of hatching.

Its subcellular location is the nucleus. Required in the M3 pharyngeal motor neuron to guide the growth cone of the sister M2 motor neuron during axon development. The chain is Zinc finger protein mnm-2 from Caenorhabditis elegans.